Consider the following 377-residue polypeptide: Chaperone protein DnaJ (377 aa).

One can recognise a J domain in the interval 5–70 (DYYEILGVSK…QKRAAYDQYG (66 aa)). The segment at 132–210 (GVTKEIRIPT…CHGHGRVEKT (79 aa)) adopts a CR-type zinc-finger fold. Zn(2+) is bound by residues C145, C148, C162, C165, C184, C187, C198, and C201. CXXCXGXG motif repeat units follow at residues 145–152 (CDVCHGSG), 162–169 (CPTCHGAG), 184–191 (CPHCQGRG), and 198–205 (CNKCHGHG).

The protein belongs to the DnaJ family. As to quaternary structure, homodimer. It depends on Zn(2+) as a cofactor.

The protein localises to the cytoplasm. Functionally, participates actively in the response to hyperosmotic and heat shock by preventing the aggregation of stress-denatured proteins and by disaggregating proteins, also in an autonomous, DnaK-independent fashion. Unfolded proteins bind initially to DnaJ; upon interaction with the DnaJ-bound protein, DnaK hydrolyzes its bound ATP, resulting in the formation of a stable complex. GrpE releases ADP from DnaK; ATP binding to DnaK triggers the release of the substrate protein, thus completing the reaction cycle. Several rounds of ATP-dependent interactions between DnaJ, DnaK and GrpE are required for fully efficient folding. Also involved, together with DnaK and GrpE, in the DNA replication of plasmids through activation of initiation proteins. In Klebsiella pneumoniae (strain 342), this protein is Chaperone protein DnaJ.